The following is a 331-amino-acid chain: Barley B recombinant-like protein D (331 aa).

Residues 43–101 are a coiled coil; it reads ALMNDRDNAIRERDHALAEKKAAIAERDMAFTQRDAAMAERNAAVVERDNALAALELAR. An alanine-zipper region spans residues 51-86; it reads AIRERDHALAEKKAAIAERDMAFTQRDAAMAERNAA. The segment covering 104-122 has biased composition (polar residues); sequence GLNMNNGNGFPQGSLSGSK. 2 disordered regions span residues 104 to 140 and 156 to 205; these read GLNM…PLQL and AYPI…VGMS.

Belongs to the BBR/BPC family. As to quaternary structure, homodimer. Heterodimer.

Its subcellular location is the nucleus. Transcriptional regulator that specifically binds to GA-rich elements (GAGA-repeats) present in regulatory sequences of genes involved in developmental processes. The sequence is that of Barley B recombinant-like protein D from Oryza sativa subsp. japonica (Rice).